An 844-amino-acid polypeptide reads, in one-letter code: DNA mismatch repair protein MutS (844 aa).

Residue 610-617 (GPNMGGKS) participates in ATP binding.

It belongs to the DNA mismatch repair MutS family.

Its function is as follows. This protein is involved in the repair of mismatches in DNA. It is possible that it carries out the mismatch recognition step. This protein has a weak ATPase activity. The sequence is that of DNA mismatch repair protein MutS from Francisella tularensis subsp. novicida (strain U112).